A 77-amino-acid polypeptide reads, in one-letter code: Membrane-associated ATPase epsilon chain (77 aa).

The protein to E.hirae NtpH. Sul-ATPase is composed of six (or maybe five) subunits: alpha, beta, delta, gamma, C (proteolipid), and possibly epsilon.

It carries out the reaction ATP + H2O + 4 H(+)(in) = ADP + phosphate + 5 H(+)(out). The protein is Membrane-associated ATPase epsilon chain (atpE) of Sulfolobus acidocaldarius (strain ATCC 33909 / DSM 639 / JCM 8929 / NBRC 15157 / NCIMB 11770).